We begin with the raw amino-acid sequence, 359 residues long: UPF0283 membrane protein Atu1356 (359 aa).

Residues 1–39 (MKAPTQNDPQTRRPAAFTLETEEAARPSATQKRAPRSFD) are disordered. 2 helical membrane passes run 75–95 (FGKL…GLWA) and 108–128 (WLGY…LALV).

The protein belongs to the UPF0283 family.

The protein resides in the cell inner membrane. In Agrobacterium fabrum (strain C58 / ATCC 33970) (Agrobacterium tumefaciens (strain C58)), this protein is UPF0283 membrane protein Atu1356.